Reading from the N-terminus, the 145-residue chain is Transcriptional regulator ZitR (145 aa).

Positions 1–142 (MSLANQIDQF…ISQFLSVLTE (142 aa)) constitute an HTH marR-type domain. Positions 23, 29, 40, and 41 each coordinate Zn(2+). The segment at residues 53–76 (NARIAEQLKISPAAVTKALKKLQE) is a DNA-binding region (H-T-H motif). Residues glutamate 106, histidine 107, and histidine 111 each contribute to the Zn(2+) site.

Homodimer.

Its activity is regulated as follows. Zinc acts as a corepressor and is required for DNA-binding activity. Binds up to two zinc ligands per monomer. Inactive under zinc deprivation. Its function is as follows. Zinc-responsive regulator that represses expression of the zit operon in the presence of zinc. Acts by binding two palindromic operator sites overlapping the -35 and -10 boxes of the zit promoter. Could be a sensitive sensor of intracellular zinc to efficiently respond to zinc variations in the environment. This chain is Transcriptional regulator ZitR (zitR), found in Lactococcus lactis subsp. cremoris (strain MG1363).